We begin with the raw amino-acid sequence, 146 residues long: Large ribosomal subunit protein uL11 (146 aa).

This sequence belongs to the universal ribosomal protein uL11 family. As to quaternary structure, part of the ribosomal stalk of the 50S ribosomal subunit. Interacts with L10 and the large rRNA to form the base of the stalk. L10 forms an elongated spine to which L12 dimers bind in a sequential fashion forming a multimeric L10(L12)X complex. In terms of processing, one or more lysine residues are methylated.

Its function is as follows. Forms part of the ribosomal stalk which helps the ribosome interact with GTP-bound translation factors. The chain is Large ribosomal subunit protein uL11 from Wolbachia pipientis wMel.